Consider the following 593-residue polypeptide: Glucose-6-phosphate 1-dehydrogenase, chloroplastic (593 aa).

NADP(+)-binding positions include 116 to 123 and R150; that span reads GASGDLAK. The cysteines at positions 168 and 176 are disulfide-linked. Residue K253 participates in NADP(+) binding. Residues K253, 283–287, E321, and D340 each bind D-glucose 6-phosphate; that span reads HYLGK. The active-site Proton acceptor is H345. K438 is an NADP(+) binding site. 2 residues coordinate D-glucose 6-phosphate: K441 and R446. The NADP(+) site is built by R451 and R480. Q482 serves as a coordination point for D-glucose 6-phosphate. NADP(+) is bound by residues 488 to 490 and R573; that span reads YLK.

The protein belongs to the glucose-6-phosphate dehydrogenase family. Homodimer.

Its subcellular location is the plastid. It is found in the chloroplast. The catalysed reaction is D-glucose 6-phosphate + NADP(+) = 6-phospho-D-glucono-1,5-lactone + NADPH + H(+). Its pathway is carbohydrate degradation; pentose phosphate pathway; D-ribulose 5-phosphate from D-glucose 6-phosphate (oxidative stage): step 1/3. With respect to regulation, regulated by metabolites. Post-translationally inactivated by cysteine-mediated redox modification via the ferredoxin-thioredoxin system in the light and this avoids futile cycles with photosynthetic CO2 fixation. Catalyzes the rate-limiting step of the oxidative pentose-phosphate pathway, which represents a route for the dissimilation of carbohydrates besides glycolysis. The main function of this enzyme is to provide reducing power (NADPH) and pentose phosphates for fatty acid and nucleic acid synthesis which are involved in membrane synthesis and cell division. The chain is Glucose-6-phosphate 1-dehydrogenase, chloroplastic from Nicotiana tabacum (Common tobacco).